The sequence spans 161 residues: Chaperone protein dnaJ 11, chloroplastic (161 aa).

Residues 1–18 are compositionally biased toward low complexity; the sequence is MLSSSPTSFTHPFLSSSP. The tract at residues 1–31 is disordered; the sequence is MLSSSPTSFTHPFLSSSPPLSPISPPSRTAR. A chloroplast-targeting transit peptide spans 1–36; sequence MLSSSPTSFTHPFLSSSPPLSPISPPSRTARISPPL. A J domain is found at 65–133; that stretch reads SLYDVLEVPL…EKRSVYDRRM (69 aa).

This sequence belongs to the DnaJ family. C/III subfamily. In terms of tissue distribution, expressed in roots, stems, leaves, flowers and developing siliques.

It is found in the plastid. The protein localises to the chloroplast stroma. In terms of biological role, plays a continuous role in plant development probably in the structural organization of compartments. In Arabidopsis thaliana (Mouse-ear cress), this protein is Chaperone protein dnaJ 11, chloroplastic (ATJ11).